The chain runs to 40 residues: Photosystem I reaction center subunit IX (40 aa).

The chain crosses the membrane as a helical span at residues 4–24; it reads FFESWPMAAVLWVWLTAGIIV.

It belongs to the PsaJ family.

The protein localises to the cellular thylakoid membrane. Functionally, may help in the organization of the PsaE and PsaF subunits. This is Photosystem I reaction center subunit IX from Prochlorococcus marinus (strain MIT 9313).